The sequence spans 464 residues: Uronate isomerase (464 aa).

It belongs to the metallo-dependent hydrolases superfamily. Uronate isomerase family.

It carries out the reaction D-glucuronate = D-fructuronate. The catalysed reaction is aldehydo-D-galacturonate = keto-D-tagaturonate. The protein operates within carbohydrate metabolism; pentose and glucuronate interconversion. The polypeptide is Uronate isomerase (Caldicellulosiruptor saccharolyticus (strain ATCC 43494 / DSM 8903 / Tp8T 6331)).